The chain runs to 245 residues: Triosephosphate isomerase (245 aa).

9–11 (NWK) contributes to the substrate binding site. Residue His92 is the Electrophile of the active site. Glu164 functions as the Proton acceptor in the catalytic mechanism. Substrate contacts are provided by residues Gly170, Ser209, and 230 to 231 (GG).

Belongs to the triosephosphate isomerase family. Homodimer.

The protein resides in the cytoplasm. It carries out the reaction D-glyceraldehyde 3-phosphate = dihydroxyacetone phosphate. It functions in the pathway carbohydrate biosynthesis; gluconeogenesis. It participates in carbohydrate degradation; glycolysis; D-glyceraldehyde 3-phosphate from glycerone phosphate: step 1/1. In terms of biological role, involved in the gluconeogenesis. Catalyzes stereospecifically the conversion of dihydroxyacetone phosphate (DHAP) to D-glyceraldehyde-3-phosphate (G3P). The polypeptide is Triosephosphate isomerase (Cupriavidus necator (strain ATCC 17699 / DSM 428 / KCTC 22496 / NCIMB 10442 / H16 / Stanier 337) (Ralstonia eutropha)).